The following is a 138-amino-acid chain: Envelope glycoprotein N (138 aa).

The N-terminal stretch at 1–21 (MEWNTLVLGLLVLSVVAESSG) is a signal peptide. Topologically, residues 22-101 (NNSSTSTSAT…SHMYELSLSS (80 aa)) are virion surface. The helical transmembrane segment at 102–122 (FAAWWTMLNALILMGAFCIVL) threads the bilayer. The Intravirion portion of the chain corresponds to 123–138 (RHCCFQNFTATTTKGY).

The protein belongs to the herpesviridae glycoprotein N family. In terms of assembly, interacts (via N-terminus) with gM (via N-terminus). The gM-gN heterodimer forms the gCII complex. In terms of processing, O-glycosylated.

The protein resides in the virion membrane. It localises to the host membrane. Its subcellular location is the host Golgi apparatus. It is found in the host trans-Golgi network. Functionally, envelope glycoprotein necessary for proper maturation of gM and modulation of its membrane fusion activity. Also plays a critical role in virion morphogenesis. The sequence is that of Envelope glycoprotein N from Human cytomegalovirus (strain AD169) (HHV-5).